The sequence spans 333 residues: GTP 3',8-cyclase (333 aa).

In terms of domain architecture, Radical SAM core spans 7-221 (KFGRVHDYIR…FEACNEAGYE (215 aa)). R16 serves as a coordination point for GTP. [4Fe-4S] cluster contacts are provided by C23 and C27. Y29 serves as a coordination point for S-adenosyl-L-methionine. C30 contacts [4Fe-4S] cluster. R66 lines the GTP pocket. Residue G70 participates in S-adenosyl-L-methionine binding. T97 contributes to the GTP binding site. S-adenosyl-L-methionine is bound at residue S121. A GTP-binding site is contributed by K158. M192 lines the S-adenosyl-L-methionine pocket. [4Fe-4S] cluster contacts are provided by C257 and C260. 262–264 (RLR) provides a ligand contact to GTP. C274 provides a ligand contact to [4Fe-4S] cluster.

The protein belongs to the radical SAM superfamily. MoaA family. In terms of assembly, monomer and homodimer. Requires [4Fe-4S] cluster as cofactor.

The catalysed reaction is GTP + AH2 + S-adenosyl-L-methionine = (8S)-3',8-cyclo-7,8-dihydroguanosine 5'-triphosphate + 5'-deoxyadenosine + L-methionine + A + H(+). It participates in cofactor biosynthesis; molybdopterin biosynthesis. Catalyzes the cyclization of GTP to (8S)-3',8-cyclo-7,8-dihydroguanosine 5'-triphosphate. This is GTP 3',8-cyclase from Listeria monocytogenes serovar 1/2a (strain ATCC BAA-679 / EGD-e).